Reading from the N-terminus, the 213-residue chain is CASP-like protein 2A1 (213 aa).

Over 1–41 (MSKMAEEKAAAVGGLGGAGAADAAQQQQLAAGEAAAARVRP) the chain is Cytoplasmic. The chain crosses the membrane as a helical span at residues 42 to 62 (VETLLRAAPLGLCVAAMTVML). The Extracellular portion of the chain corresponds to 63 to 83 (RNQQSNEYGAVAYSDLGGFKY). A helical transmembrane segment spans residues 84 to 104 (LVYANGLCAAYSLVSAFYTAV). Residues 105-113 (PRPATVSRS) are Cytoplasmic-facing. A helical membrane pass occupies residues 114–134 (WLVFLLDQVFTYLILAAGAAA). The Extracellular portion of the chain corresponds to 135–166 (AELLYLAYNGDKEVTWSEACGVFGSFCRQART). The chain crosses the membrane as a helical span at residues 167–187 (SVAITFGTVLCFILLSLISSY). The Cytoplasmic segment spans residues 188 to 213 (RLFSAYEAPPSSALGSKGVEIAAYPR).

This sequence belongs to the Casparian strip membrane proteins (CASP) family. Homodimer and heterodimers.

It is found in the cell membrane. In Zea mays (Maize), this protein is CASP-like protein 2A1.